Reading from the N-terminus, the 711-residue chain is DNA topoisomerase 3 (711 aa).

The Toprim domain occupies Lys2–Thr135. Mg(2+)-binding residues include Glu8 and Asp104. In terms of domain architecture, Topo IA-type catalytic spans Tyr152–Val580. Positions Ser186–Gln191 are interaction with DNA. Tyr305 functions as the O-(5'-phospho-DNA)-tyrosine intermediate in the catalytic mechanism. Positions Met691–Leu711 are disordered.

The protein belongs to the type IA topoisomerase family. The cofactor is Mg(2+).

It catalyses the reaction ATP-independent breakage of single-stranded DNA, followed by passage and rejoining.. Functionally, releases the supercoiling and torsional tension of DNA, which is introduced during the DNA replication and transcription, by transiently cleaving and rejoining one strand of the DNA duplex. Introduces a single-strand break via transesterification at a target site in duplex DNA. The scissile phosphodiester is attacked by the catalytic tyrosine of the enzyme, resulting in the formation of a DNA-(5'-phosphotyrosyl)-enzyme intermediate and the expulsion of a 3'-OH DNA strand. The free DNA strand then undergoes passage around the unbroken strand, thus removing DNA supercoils. Finally, in the religation step, the DNA 3'-OH attacks the covalent intermediate to expel the active-site tyrosine and restore the DNA phosphodiester backbone. This Staphylococcus aureus (strain NCTC 8325 / PS 47) protein is DNA topoisomerase 3.